Here is a 326-residue protein sequence, read N- to C-terminus: MSKTVKVAVTGAAGQIGYSLLFRIASGQMFGADTAVEIQMLELEAAIPAAKGVIMELEDCAFPLLQKVTVSSDLDTAFKEINWALLVGSVPRKAGMERGDLLKINGGIFVNQGKAIEKNAASDVRILVVGNPCNTNCLIAMNNAKGISQDRWFAMTKLDENRAKSQLASKAGVPVKEVTHLGIWGNHSATQYPDFYNTKISGKPVTDVISDHEWLKGDFIKNVQQRGAEIIKARGASSAASAANGVVDTVRGIITPTAPGDCFSAAVVSDGSYGAEKGLIFGFPLKSDGKKVEIIQGISLNDFAKEKFKITHEELVSERNEVKEML.

Glycine 11–glycine 17 provides a ligand contact to NAD(+). Arginine 92 and arginine 98 together coordinate substrate. Residues asparagine 105, glutamine 112, and valine 129–asparagine 131 contribute to the NAD(+) site. Substrate contacts are provided by asparagine 131 and arginine 162. The active-site Proton acceptor is the histidine 187.

It belongs to the LDH/MDH superfamily. MDH type 2 family.

It catalyses the reaction (S)-malate + NAD(+) = oxaloacetate + NADH + H(+). Its function is as follows. Catalyzes the reversible oxidation of malate to oxaloacetate. This Leptospira interrogans serogroup Icterohaemorrhagiae serovar Lai (strain 56601) protein is Malate dehydrogenase.